Here is an 854-residue protein sequence, read N- to C-terminus: DNA mismatch repair protein MutS (854 aa).

614-621 (GPNMGGKS) lines the ATP pocket.

This sequence belongs to the DNA mismatch repair MutS family.

This protein is involved in the repair of mismatches in DNA. It is possible that it carries out the mismatch recognition step. This protein has a weak ATPase activity. The protein is DNA mismatch repair protein MutS of Sodalis glossinidius (strain morsitans).